The chain runs to 168 residues: Inorganic pyrophosphatase (168 aa).

The substrate site is built by Lys-23, Arg-37, and Tyr-49. Positions 59, 64, and 96 each coordinate Mg(2+). Tyr-133 is a binding site for substrate.

Belongs to the PPase family. In terms of assembly, homohexamer. Mg(2+) is required as a cofactor.

The protein localises to the cytoplasm. It carries out the reaction diphosphate + H2O = 2 phosphate + H(+). In terms of biological role, catalyzes the hydrolysis of inorganic pyrophosphate (PPi) forming two phosphate ions. This chain is Inorganic pyrophosphatase, found in Methanosarcina acetivorans (strain ATCC 35395 / DSM 2834 / JCM 12185 / C2A).